The primary structure comprises 65 residues: Large ribosomal subunit protein bL35 (65 aa).

Residues 1–16 show a composition bias toward basic residues; sequence MPKMKTKSGAKKRFRV. Positions 1–25 are disordered; the sequence is MPKMKTKSGAKKRFRVRPGGTVKRG.

This sequence belongs to the bacterial ribosomal protein bL35 family.

This Herminiimonas arsenicoxydans protein is Large ribosomal subunit protein bL35.